A 493-amino-acid polypeptide reads, in one-letter code: GTPase Der (493 aa).

Residues 3 to 166 (PVIALVGRPN…EALGIFPKDN (164 aa)) enclose the EngA-type G 1 domain. GTP-binding positions include 9–16 (GRPNVGKS), 56–60 (DTGGI), and 118–121 (NKVD). Positions 166-195 (NAEEEGEGEPASEEVAEGEEPTRIPGPSEK) are disordered. Residues 167-184 (AEEEGEGEPASEEVAEGE) show a composition bias toward acidic residues. The region spanning 198-371 (IKIAIIGRPN…SVQESFRSAV (174 aa)) is the EngA-type G 2 domain. GTP-binding positions include 204–211 (GRPNVGKS), 251–255 (DTAGV), and 316–319 (NKWD). The 85-residue stretch at 372-456 (TRWPTSRLTS…PIRIEYKGGE (85 aa)) folds into the KH-like domain. Over residues 454–463 (GGENPYEGKK) the composition is skewed to basic and acidic residues. A disordered region spans residues 454–493 (GGENPYEGKKNSLTARQVNKKRRLMSHHKKAEKKKKDKRR). Basic residues predominate over residues 471–493 (VNKKRRLMSHHKKAEKKKKDKRR).

It belongs to the TRAFAC class TrmE-Era-EngA-EngB-Septin-like GTPase superfamily. EngA (Der) GTPase family. As to quaternary structure, associates with the 50S ribosomal subunit.

Functionally, GTPase that plays an essential role in the late steps of ribosome biogenesis. In Pseudomonas aeruginosa (strain UCBPP-PA14), this protein is GTPase Der.